A 100-amino-acid chain; its full sequence is Large ribosomal subunit protein uL23 (100 aa).

The protein belongs to the universal ribosomal protein uL23 family. As to quaternary structure, part of the 50S ribosomal subunit. Contacts protein L29, and trigger factor when it is bound to the ribosome.

One of the early assembly proteins it binds 23S rRNA. One of the proteins that surrounds the polypeptide exit tunnel on the outside of the ribosome. Forms the main docking site for trigger factor binding to the ribosome. This is Large ribosomal subunit protein uL23 from Xylella fastidiosa (strain 9a5c).